The chain runs to 156 residues: Deoxyuridine 5'-triphosphate nucleotidohydrolase (156 aa).

Residues 76–78 (RSG), Asn89, 93–95 (TVD), and Lys103 each bind substrate.

It belongs to the dUTPase family. The cofactor is Mg(2+).

It carries out the reaction dUTP + H2O = dUMP + diphosphate + H(+). The protein operates within pyrimidine metabolism; dUMP biosynthesis; dUMP from dCTP (dUTP route): step 2/2. Functionally, this enzyme is involved in nucleotide metabolism: it produces dUMP, the immediate precursor of thymidine nucleotides and it decreases the intracellular concentration of dUTP so that uracil cannot be incorporated into DNA. The chain is Deoxyuridine 5'-triphosphate nucleotidohydrolase from Rhizobium etli (strain ATCC 51251 / DSM 11541 / JCM 21823 / NBRC 15573 / CFN 42).